We begin with the raw amino-acid sequence, 299 residues long: Acetylglutamate kinase (299 aa).

Substrate is bound by residues G68 to G69, R90, and N195.

It belongs to the acetylglutamate kinase family. ArgB subfamily.

It is found in the cytoplasm. The catalysed reaction is N-acetyl-L-glutamate + ATP = N-acetyl-L-glutamyl 5-phosphate + ADP. Its pathway is amino-acid biosynthesis; L-arginine biosynthesis; N(2)-acetyl-L-ornithine from L-glutamate: step 2/4. Catalyzes the ATP-dependent phosphorylation of N-acetyl-L-glutamate. The sequence is that of Acetylglutamate kinase from Erythrobacter litoralis (strain HTCC2594).